Reading from the N-terminus, the 1091-residue chain is ATP-dependent helicase/deoxyribonuclease subunit B (1091 aa).

It belongs to the helicase family. AddB/RexB type 2 subfamily. As to quaternary structure, heterodimer of AddA and RexB. Mg(2+) is required as a cofactor.

Functionally, the heterodimer acts as both an ATP-dependent DNA helicase and an ATP-dependent, dual-direction single-stranded exonuclease. Recognizes the chi site generating a DNA molecule suitable for the initiation of homologous recombination. This subunit has 5' -&gt; 3' nuclease activity but not helicase activity. In Streptococcus pneumoniae (strain ATCC 700669 / Spain 23F-1), this protein is ATP-dependent helicase/deoxyribonuclease subunit B.